The sequence spans 54 residues: Light-harvesting protein B-870 beta chain (54 aa).

The Cytoplasmic segment spans residues 1-20; it reads EVKQESLSGITEGEAKEFHK. A bacteriochlorophyll-binding residues include H19 and H37. The helical transmembrane segment at 21–43 threads the bilayer; sequence IFTSSILVFFGVAAFAHLLVWIW. Topologically, residues 44-54 are periplasmic; that stretch reads RPWVPGPNGYS.

It belongs to the antenna complex beta subunit family. The core complex is formed by different alpha and beta chains, binding bacteriochlorophyll molecules, and arranged most probably in tetrameric structures disposed around the reaction center. The non-pigmented gamma chains may constitute additional components.

The protein resides in the cell inner membrane. In terms of biological role, antenna complexes are light-harvesting systems, which transfer the excitation energy to the reaction centers. This Rhodospirillum rubrum protein is Light-harvesting protein B-870 beta chain.